The chain runs to 105 residues: Small ribosomal subunit protein eS24 (105 aa).

This sequence belongs to the eukaryotic ribosomal protein eS24 family.

The protein is Small ribosomal subunit protein eS24 of Ignicoccus hospitalis (strain KIN4/I / DSM 18386 / JCM 14125).